Here is a 747-residue protein sequence, read N- to C-terminus: Tripartite terminase subunit 3 (747 aa).

Residues 194–198 (KRAKV) carry the Nuclear localization signal motif. Positions 267 to 274 (VPRRHGKT) match the Walker A motif motif. The Walker B motif motif lies at 361 to 366 (LLFVDE). The For ATPase activity role is filled by glutamate 366. Active-site for nuclease activity residues include aspartate 521, glutamate 593, and aspartate 722.

It belongs to the herpesviridae TRM3 protein family. In terms of assembly, interacts with the terminase subunits TRM1 and TRM2. Interacts with portal protein.

It localises to the host nucleus. Functionally, component of the molecular motor that translocates viral genomic DNA in empty capsid during DNA packaging. Forms a tripartite terminase complex together with TRM1 and TRM2 in the host cytoplasm. Once the complex reaches the host nucleus, it interacts with the capsid portal vertex. This portal forms a ring in which genomic DNA is translocated into the capsid. TRM3 carries an RNase H-like nuclease activity that plays an important role for the cleavage of concatemeric viral DNA into unit length genomes. In Homo sapiens (Human), this protein is Tripartite terminase subunit 3.